We begin with the raw amino-acid sequence, 97 residues long: Aspartyl/glutamyl-tRNA(Asn/Gln) amidotransferase subunit C (97 aa).

This sequence belongs to the GatC family. Heterotrimer of A, B and C subunits.

It catalyses the reaction L-glutamyl-tRNA(Gln) + L-glutamine + ATP + H2O = L-glutaminyl-tRNA(Gln) + L-glutamate + ADP + phosphate + H(+). It carries out the reaction L-aspartyl-tRNA(Asn) + L-glutamine + ATP + H2O = L-asparaginyl-tRNA(Asn) + L-glutamate + ADP + phosphate + 2 H(+). In terms of biological role, allows the formation of correctly charged Asn-tRNA(Asn) or Gln-tRNA(Gln) through the transamidation of misacylated Asp-tRNA(Asn) or Glu-tRNA(Gln) in organisms which lack either or both of asparaginyl-tRNA or glutaminyl-tRNA synthetases. The reaction takes place in the presence of glutamine and ATP through an activated phospho-Asp-tRNA(Asn) or phospho-Glu-tRNA(Gln). The polypeptide is Aspartyl/glutamyl-tRNA(Asn/Gln) amidotransferase subunit C (Prochlorococcus marinus (strain AS9601)).